We begin with the raw amino-acid sequence, 132 residues long: ATP synthase epsilon chain, chloroplastic (132 aa).

Thr2 carries the N-acetylthreonine modification.

It belongs to the ATPase epsilon chain family. In terms of assembly, F-type ATPases have 2 components, CF(1) - the catalytic core - and CF(0) - the membrane proton channel. CF(1) has five subunits: alpha(3), beta(3), gamma(1), delta(1), epsilon(1). CF(0) has three main subunits: a, b and c.

The protein resides in the plastid. It is found in the chloroplast thylakoid membrane. Its function is as follows. Produces ATP from ADP in the presence of a proton gradient across the membrane. The polypeptide is ATP synthase epsilon chain, chloroplastic (Arabidopsis thaliana (Mouse-ear cress)).